The chain runs to 228 residues: L-ribulose-5-phosphate 4-epimerase UlaF (228 aa).

Substrate-binding positions include 26-27, 43-44, and 72-73; these read GN, SG, and SS. Residues D74, H93, and H95 each contribute to the Zn(2+) site. Catalysis depends on D118, which acts as the Proton donor/acceptor. H167 serves as a coordination point for Zn(2+). Y225 acts as the Proton donor/acceptor in catalysis.

It belongs to the aldolase class II family. AraD/FucA subfamily. Zn(2+) is required as a cofactor.

The catalysed reaction is L-ribulose 5-phosphate = D-xylulose 5-phosphate. The protein operates within cofactor degradation; L-ascorbate degradation; D-xylulose 5-phosphate from L-ascorbate: step 4/4. Functionally, catalyzes the isomerization of L-ribulose 5-phosphate to D-xylulose 5-phosphate. Is involved in the anaerobic L-ascorbate utilization. The chain is L-ribulose-5-phosphate 4-epimerase UlaF from Escherichia coli O8 (strain IAI1).